Reading from the N-terminus, the 367-residue chain is Heme A synthase 2 (367 aa).

The next 5 membrane-spanning stretches (helical) occupy residues 28 to 48, 114 to 134, 143 to 163, 180 to 200, and 221 to 241; these read MVAI…GIGA, MWGR…LWTG, WLVT…WMVA, VHYC…LTVL, and MAMG…FLSG. Heme is bound at residue H284. Helical transmembrane passes span 286–306, 314–334, and 340–360; these read LLGT…IRAD, AFLV…TTLV, and IGIV…WAWF. Heme is bound at residue H344.

This sequence belongs to the COX15/CtaA family. Type 2 subfamily. Interacts with CtaB. Heme b serves as cofactor.

The protein resides in the cell membrane. The catalysed reaction is Fe(II)-heme o + 2 A + H2O = Fe(II)-heme a + 2 AH2. Its pathway is porphyrin-containing compound metabolism; heme A biosynthesis; heme A from heme O: step 1/1. In terms of biological role, catalyzes the conversion of heme O to heme A by two successive hydroxylations of the methyl group at C8. The first hydroxylation forms heme I, the second hydroxylation results in an unstable dihydroxymethyl group, which spontaneously dehydrates, resulting in the formyl group of heme A. This is Heme A synthase 2 from Acidiphilium cryptum (strain JF-5).